Consider the following 1538-residue polypeptide: MATDGGPLAASSASLDSSLSPLHASPSPSSTYTASSLALSAPAIAASFSVASTFSNSLIPPPPLPPPTPSTMAGWFGWVFSFFFQVIPSVLYWVITFATITLPTWLFTLFSMSLTFTMNFTTLLLIALAIVSTISWFIRYRFLNMYSRLPSEPQRKEPHLDLFPDVQEGDSKPGLANYLDEFLSAIKVFGYLERPVFHELTRTMQTRKLIAGETLMLEEEKGFCLVVDGLVQIFVKSMRDGKPNVDEGSNHMGAESSDEDDHRVDGKQGYQLLTEVKNGASMSSLFSILSLFTEDIQLRASEGSSSSASSVGPSTNARVSDSFPASPHGLEDSPRSNFVRDHGDSVAHISNSNGELLPSVPPLNLGESHAMPIQEPYPKPRSQPGKRRRKSVHPDIVARAMVDTTIAIIPASAFRRLTRVYPRATAHIVQVILTRLQRVTFATAHSYLGLNNDVLGIEKQMTKFTTQDLPNEMRGAALDRLKDKFIKERDRLGPEEIIKGIALHNPFAGRRRRSSSFLRKEAVLHAKMAAQSKRPVSMASPEDISGDRESAGPSPGDLLSTIQLSRFGPRYEHLAPKLLSPLTDKENPPFMAPVMHSSPFHRKKDAVDEDALFRESILDCIMNGIGLTSSTRDVLRKSSHTSGDISPKLLSYDSRRQKAVFTNNAFGFIDPYDSSADGETESMMSMSMTSAGGTSPIVNLREELRNDIEIVYFPQGSVLVEQGERHPGLYYVIDGFLDVGIPVSDKGEDLVGGSRPVYGQPPEEFFPTLKRTTTSSSRVSGVTSATNDTKRKRQSRKSLYLIKPGGIQGYVGSVASYRSYTDVVAKTDVYVGFLPRSSLERIAERYPIALLTLAKRLTSLLPRLLLHIDFALEWVQVSAGQVIYHQGDESDAIYLVLNGRLRSVLEGTDGKITVVGEYGQGESVGELEVMTESTRPATLHAIRDTELAKFPRSLFNSLAQEHPGITIQVSKLIAQRMRDLVELPMPEKGGEHANVGSVKTAASVVNLRTVGILPVTAGVPVVEFGHRLQNALHQIGVTNGVTSLNQAAILNHLGRHAFSKMGKLKLSQYLADLEEKYGMVLYIADTNVNSPWTQTCITQADCILLVGLAESSPSIGEYERFLLGMKTTARKELVLLHSERYCPPGLTRQWLKNRMWINGGHHHIQMGFRLTPEPSHPQAKRLGAVLKQRVQVIQAEIQKYTSRRIRQTPLYSAQTPFKGDFHRLARRLCGRSVGLVLGGGGARGIAQVGVIKALEEAGIPIDIIGGTSIGSFIGALYARDADVVPMYGRAKKFAGRMASMWRFMLDLTYPTTSYTTGHEFNRGIFKTFGDSQIEDFWLEYYCNTTNISKSRPEFHSSGYTWRYVRASMSLAGLIPPICDEGSMLLDGGYIDNLTVTHMKGLGADVIFAVDVGSIDDNTPQGYGDSLSGFWTVLNRWNPFSACPNPPTLSEIQARLAYVSSIDNLERAKNTPGCLYMRPPIDPYGTLEFGKFDEIYQVGYAYGKQYLEKLRSEGSLPLPEETEEKKKLQRTLAPRRASI.

Residues 1–74 (MATDGGPLAA…PPPTPSTMAG (74 aa)) are Cytoplasmic-facing. The helical transmembrane segment at 75–95 (WFGWVFSFFFQVIPSVLYWVI) threads the bilayer. Residues 96–117 (TFATITLPTWLFTLFSMSLTFT) lie on the Lumenal side of the membrane. The chain crosses the membrane as a helical span at residues 118–138 (MNFTTLLLIALAIVSTISWFI). At 139–1538 (RYRFLNMYSR…RTLAPRRASI (1400 aa)) the chain is on the cytoplasmic side. Disordered regions lie at residues 242-264 (KPNV…DHRV), 302-393 (EGSS…KSVH), and 529-559 (AAQS…GDLL). Residues 302 to 314 (EGSSSSASSVGPS) show a composition bias toward low complexity. Residues 329–345 (GLEDSPRSNFVRDHGDS) show a composition bias toward basic and acidic residues. Residues 692-811 (GGTS…QGYV) and 856-976 (RLTS…IAQR) contribute to the a nucleoside 3',5'-cyclic phosphate site. In terms of domain architecture, PNPLA spans 1235–1399 (LVLGGGGARG…IDNLTVTHMK (165 aa)). A GXGXXG motif is present at residues 1239–1244 (GGGARG). Positions 1266-1270 (GTSIG) match the GXSXG motif. The active-site Nucleophile is serine 1268. Aspartate 1386 (proton acceptor) is an active-site residue. Residues 1386–1388 (DGG) carry the DGA/G motif. A disordered region spans residues 1517-1538 (LPEETEEKKKLQRTLAPRRASI).

Belongs to the NTE family.

Its subcellular location is the endoplasmic reticulum membrane. The enzyme catalyses a 1-acyl-sn-glycero-3-phosphocholine + H2O = sn-glycerol 3-phosphocholine + a fatty acid + H(+). Its activity is regulated as follows. Inhibited by organophosphorus esters. Functionally, intracellular phospholipase B that catalyzes the double deacylation of phosphatidylcholine (PC) to glycerophosphocholine (GroPCho). Plays an important role in membrane lipid homeostasis. Responsible for the rapid PC turnover in response to inositol, elevated temperatures, or when choline is present in the growth medium. The protein is Lysophospholipase nte1 (nte1) of Aspergillus oryzae (strain ATCC 42149 / RIB 40) (Yellow koji mold).